An 859-amino-acid polypeptide reads, in one-letter code: MSSSSSSSESSPNLSRSNSLANTMVSMKTEDHTGLYDHRQHPDSLPVRHQPPTLKNKEIAKSTKPSIPKEQKSATRYNSHVDVGSVPSRGRMDFEDEGQGMDETVAHHQLRASAILTSNARPSRLAHSMPHQRQLYVESNIHTPPKDVGVKRDYTMSSSTASSGNKSKLSASSSASPITKVRKSSLVSPVLEIPHESKSDTHSKLAKPKKRTYSTTSAHSSINPAVLLTKSTSQKSDADDDTLERKPVRMNTRASFDSDVSQASRDSQETEEDVCFPMPPQLHTRVNGIDFDELEEYAQFANAEKSQFLASLQVPNEQKYSNVSQDIGFTSSTSTSGSSAALKYTPRVSQTGEKSESTNETEIHEKKEDEHEKIKPSLHPGISFGKNKVEGEENENIPSNDPAYCSYQGTDFQIPNRFSFFCSESDETVHASDIPSLVSEGQTFYELFRGGEPTWWLDCSCPTDDEMRCIAKAFGIHPLTAEDIRMQETREKVELFKSYYFVCFHTFENDKESEDFLEPINVYIVVCRSGVLTFHFGPISHCANVRRRVRQLRDYVNVNSDWLCYALIDDITDSFAPVIQSIEYEADAIEDSVFMARDMDFAAMLQRIGESRRKTMTLMRLLSGKADVIKMFAKRCQDEANGIGPALTSQINIANLQARQDNASHIKNNSSTTVPNNYAPTTSQPRGDIALYLGDIQDHLLTMFQNLLAYEKIFSRSHTNYLAQLQVESFNSNNKVTEMLGKVTMIGTMLVPLNVITGLFGMNVKVPGENSSIAWWFGILGVLLLLAVLGWFLASYWIKRIDPPATLNEAAESGAKSVISSFLPKRNKRFNDRSKNINVRAGPSNKSVASLPSRYSRYD.

Residues 1–20 (MSSSSSSSESSPNLSRSNSL) show a composition bias toward low complexity. Disordered stretches follow at residues 1–281 (MSSS…MPPQ) and 330–399 (TSST…NIPS). Position 2 is an N-acetylserine (Ser2). Composition is skewed to basic and acidic residues over residues 28–42 (KTED…RQHP) and 55–73 (KNKE…EQKS). Position 77 is a phosphotyrosine (Tyr77). Ser85 is subject to Phosphoserine. Positions 144 to 154 (PPKDVGVKRDY) are enriched in basic and acidic residues. The span at 157-176 (SSSTASSGNKSKLSASSSAS) shows a compositional bias: low complexity. A phosphoserine mark is found at Ser185 and Ser188. The span at 193–203 (IPHESKSDTHS) shows a compositional bias: basic and acidic residues. Residues 213-235 (YSTTSAHSSINPAVLLTKSTSQK) show a composition bias toward polar residues. Phosphoserine occurs at positions 220, 221, and 236. Thr242 is subject to Phosphothreonine. The span at 252–265 (TRASFDSDVSQASR) shows a compositional bias: polar residues. Residues 330-339 (TSSTSTSGSS) are compositionally biased toward low complexity. A compositionally biased stretch (basic and acidic residues) spans 353 to 375 (EKSESTNETEIHEKKEDEHEKIK). Transmembrane regions (helical) follow at residues 744 to 764 (TMIG…GMNV) and 773 to 793 (IAWW…GWFL). The tract at residues 830-859 (FNDRSKNINVRAGPSNKSVASLPSRYSRYD) is disordered. Phosphoserine is present on Ser850.

It belongs to the CorA metal ion transporter (MIT) (TC 1.A.35) family.

It is found in the cell membrane. Functionally, plasma membrane magnesium transporter. The sequence is that of Magnesium transporter ALR1 (ALR1) from Saccharomyces cerevisiae (strain ATCC 204508 / S288c) (Baker's yeast).